We begin with the raw amino-acid sequence, 145 residues long: Transcription antitermination protein NusB (145 aa).

This sequence belongs to the NusB family.

Involved in transcription antitermination. Required for transcription of ribosomal RNA (rRNA) genes. Binds specifically to the boxA antiterminator sequence of the ribosomal RNA (rrn) operons. This Burkholderia ambifaria (strain MC40-6) protein is Transcription antitermination protein NusB.